The chain runs to 33 residues: Brevinin-2Ef (33 aa).

A disulfide bond links Cys-27 and Cys-33.

Expressed by the skin glands.

It localises to the secreted. Its function is as follows. Shows antibacterial activity against representative Gram-negative and Gram-positive bacterial species, and hemolytic activity. The chain is Brevinin-2Ef from Pelophylax ridibundus (Marsh frog).